A 346-amino-acid polypeptide reads, in one-letter code: Holliday junction branch migration complex subunit RuvB (346 aa).

The interval 4–184 is large ATPase domain (RuvB-L); the sequence is TDRLIAPTAK…FGIVQRLEFY (181 aa). ATP is bound by residues Arg24, Gly65, Lys68, Thr69, Thr70, 131 to 133, Arg174, Tyr184, and Arg221; that span reads EDF. Residue Thr69 coordinates Mg(2+). Residues 185-255 are small ATPAse domain (RuvB-S); it reads NVKDLTHIVA…LADKALNMLN (71 aa). The tract at residues 258–346 is head domain (RuvB-H); sequence ERGFDHMDRR…QESQGGEGIA (89 aa). DNA contacts are provided by Arg294, Arg313, and Arg318.

The protein belongs to the RuvB family. In terms of assembly, homohexamer. Forms an RuvA(8)-RuvB(12)-Holliday junction (HJ) complex. HJ DNA is sandwiched between 2 RuvA tetramers; dsDNA enters through RuvA and exits via RuvB. An RuvB hexamer assembles on each DNA strand where it exits the tetramer. Each RuvB hexamer is contacted by two RuvA subunits (via domain III) on 2 adjacent RuvB subunits; this complex drives branch migration. In the full resolvosome a probable DNA-RuvA(4)-RuvB(12)-RuvC(2) complex forms which resolves the HJ.

Its subcellular location is the cytoplasm. It catalyses the reaction ATP + H2O = ADP + phosphate + H(+). Functionally, the RuvA-RuvB-RuvC complex processes Holliday junction (HJ) DNA during genetic recombination and DNA repair, while the RuvA-RuvB complex plays an important role in the rescue of blocked DNA replication forks via replication fork reversal (RFR). RuvA specifically binds to HJ cruciform DNA, conferring on it an open structure. The RuvB hexamer acts as an ATP-dependent pump, pulling dsDNA into and through the RuvAB complex. RuvB forms 2 homohexamers on either side of HJ DNA bound by 1 or 2 RuvA tetramers; 4 subunits per hexamer contact DNA at a time. Coordinated motions by a converter formed by DNA-disengaged RuvB subunits stimulates ATP hydrolysis and nucleotide exchange. Immobilization of the converter enables RuvB to convert the ATP-contained energy into a lever motion, pulling 2 nucleotides of DNA out of the RuvA tetramer per ATP hydrolyzed, thus driving DNA branch migration. The RuvB motors rotate together with the DNA substrate, which together with the progressing nucleotide cycle form the mechanistic basis for DNA recombination by continuous HJ branch migration. Branch migration allows RuvC to scan DNA until it finds its consensus sequence, where it cleaves and resolves cruciform DNA. The chain is Holliday junction branch migration complex subunit RuvB from Cellvibrio japonicus (strain Ueda107) (Pseudomonas fluorescens subsp. cellulosa).